The following is a 378-amino-acid chain: E3 ubiquitin-protein ligase ATL9 (378 aa).

Positions 1–33 (MAILDTKSSRWIPHNLLFLLLLLLLQSVPYGFG) are cleaved as a signal peptide. A helical membrane pass occupies residues 51–71 (VVVVITVLFLVIFFMVFGSIF). Residues 135 to 177 (CAVCLCEFEDDETLRLMPPCCHVFHADCVDVWLSEHSTCPLCR) form an RING-type; atypical zinc finger. Disordered stretches follow at residues 187–211 (DDDD…DPER), 300–326 (ARSS…RKSN), and 350–378 (FSGD…DERV). The segment covering 193-207 (ESYSGTDPGTISSST) has biased composition (polar residues). Positions 301-317 (RSSRSGYRSGSVGSERS) are enriched in low complexity. The span at 364–378 (AGERSFERLRPDERV) shows a compositional bias: basic and acidic residues.

It belongs to the RING-type zinc finger family. ATL subfamily.

Its subcellular location is the membrane. It catalyses the reaction S-ubiquitinyl-[E2 ubiquitin-conjugating enzyme]-L-cysteine + [acceptor protein]-L-lysine = [E2 ubiquitin-conjugating enzyme]-L-cysteine + N(6)-ubiquitinyl-[acceptor protein]-L-lysine.. The protein operates within protein modification; protein ubiquitination. E3 ubiquitin-protein ligase able to catalyze polyubiquitination with ubiquitin-conjugating enzyme E2 UBC8 in vitro. May be involved in the early steps of the plant defense signaling pathway. This is E3 ubiquitin-protein ligase ATL9 (ATL9) from Arabidopsis thaliana (Mouse-ear cress).